We begin with the raw amino-acid sequence, 174 residues long: NADH-quinone oxidoreductase subunit C (174 aa).

This sequence belongs to the complex I 30 kDa subunit family. As to quaternary structure, NDH-1 is composed of 14 different subunits. Subunits NuoB, C, D, E, F, and G constitute the peripheral sector of the complex.

Its subcellular location is the cell membrane. The catalysed reaction is a quinone + NADH + 5 H(+)(in) = a quinol + NAD(+) + 4 H(+)(out). Its function is as follows. NDH-1 shuttles electrons from NADH, via FMN and iron-sulfur (Fe-S) centers, to quinones in the respiratory chain. The immediate electron acceptor for the enzyme in this species is believed to be ubiquinone. Couples the redox reaction to proton translocation (for every two electrons transferred, four hydrogen ions are translocated across the cytoplasmic membrane), and thus conserves the redox energy in a proton gradient. This chain is NADH-quinone oxidoreductase subunit C, found in Roseiflexus sp. (strain RS-1).